The following is a 2168-amino-acid chain: Bromodomain adjacent to zinc finger domain protein 2B (2168 aa).

8 disordered regions span residues 1-29 (MESGERLPSSAASSTTPTSSSTPSVASVV), 140-348 (FAPP…KQPQ), 409-428 (LKAGNKNTSEESSLLTSELR), 459-479 (SNPKATSSSPAHPKQTLENNH), 528-698 (STPF…LHIA), 719-740 (GTSSSTLTSSPHSGTSKRRRVT), 841-872 (MEGRRGRPPNPDRQRAREESRMRRRKGRPPNV), and 1021-1043 (RKKAEEKERLKQEKRDEKRLNKE). The span at 8–29 (PSSAASSTTPTSSSTPSVASVV) shows a compositional bias: low complexity. Polar residues-rich tracts occupy residues 146–163 (NHDSSSFHSRTSGKSNRN) and 171–193 (GSINGSNTSSVIGINTSVLSTTA). Low complexity-rich tracts occupy residues 194–204 (SSSMGQTKSTS) and 240–263 (ESSSNSDSDSGTSSDTSSEGISSS). Over residues 264 to 291 (DSDDLEEDEEEEDQSIEESEDDDSDSES) the composition is skewed to acidic residues. Residues 307 to 325 (SDPKADGQKATEKAQEKRI) show a composition bias toward basic and acidic residues. A compositionally biased stretch (low complexity) spans 335 to 348 (SQTHSFQSQQKQPQ). 2 stretches are compositionally biased toward polar residues: residues 461 to 479 (PKATSSSPAHPKQTLENNH) and 528 to 551 (STPFSSPVNLSTSGRRTPGNQTPV). Residues 592–605 (RGTDSDIPSSKDSE) show a composition bias toward basic and acidic residues. A compositionally biased stretch (acidic residues) spans 606-663 (DSNEDEEEDDEEEDEEDDEDDESDDSQSESDSNSESDTEGSEEEDDDDKDQDESDSDT). Residues 670 to 693 (MKLNKTTSSVKSPSMSLTGHSTPR) show a composition bias toward polar residues. The span at 720 to 732 (TSSSTLTSSPHSG) shows a compositional bias: low complexity. An MBD domain is found at 739–810 (VTDERELRIP…DNFSFSAKIR (72 aa)). Residues 841–861 (MEGRRGRPPNPDRQRAREESR) are compositionally biased toward basic and acidic residues. The stretch at 883 to 1061 (AKLLRKLQAQ…ELEMAKELKK (179 aa)) forms a coiled coil. One can recognise a DDT domain in the interval 1087-1152 (GSTFSDCLMV…LSAAVCDPGL (66 aa)). A disordered region spans residues 1265-1341 (KRDTSGGIDL…CEDEDEGDQA (77 aa)). Residues 1297–1321 (SDYDDDDDDDSDDQGDEDDEDEEDK) are compositionally biased toward acidic residues. The span at 1322-1331 (EDKKGKKTDI) shows a compositional bias: basic and acidic residues. Residues 1334-1375 (DEDEGDQAASVEELEKQIEKLSKQQSQYRRKLFDASHSLRSV) adopt a coiled-coil conformation. K1425 is covalently cross-linked (Glycyl lysine isopeptide (Lys-Gly) (interchain with G-Cter in SUMO2)). Position 1462 is an N6-acetyllysine (K1462). A phosphoserine mark is found at S1465 and S1467. The segment covering 1503-1533 (SGKHSLGSVQSTATQSNVEKADSNNLFNTGS) has biased composition (polar residues). Disordered regions lie at residues 1503 to 1542 (SGKHSLGSVQSTATQSNVEKADSNNLFNTGSSGPGKFYSP), 1582 to 1607 (SLVTPQSQPPSKSPSPTPAPLGSSAQ), and 1670 to 1694 (TSNVASSKSESPVPQNEKATSAQPA). Residues 1588-1600 (SQPPSKSPSPTPA) are compositionally biased toward pro residues. Over residues 1670–1692 (TSNVASSKSESPVPQNEKATSAQ) the composition is skewed to polar residues. Phosphoserine is present on S1680. The segment at 1931–1981 (KVYCQICRKGDNEELLLLCDGCDKGCHTYCHRPKITTIPDGDWFCPACIAK) adopts a PHD-type zinc-finger fold. Residues 1998–2040 (KTNESKKGKKVTLTGDTEDEDSASTSSSLKRGNKDLKKRKMEE) form a disordered region. Phosphothreonine is present on T2014. A Phosphoserine modification is found at S2019. Residues 2029–2040 (GNKDLKKRKMEE) are compositionally biased toward basic and acidic residues. The 105-residue stretch at 2060-2164 (RDDSKDLALC…KYFEKKWTDT (105 aa)) folds into the Bromo domain.

It belongs to the WAL family. As to quaternary structure, component of the BRF-1 ISWI chromatin remodeling complex, at least composed of SMARCA1 and BAZ2B, which regulates the spacing of histone octamers on the DNA template to facilitate access to DNA. Within the BRF-1 ISWI chromatin remodeling complex interacts with SMARCA1; the interaction is direct. Component of the BRF-5 ISWI chromatin remodeling complex, at least composed of SMARCA5/SNF2H and BAZ2B, which regulates the spacing of histone octamers on the DNA template to facilitate access to DNA. Within the BRF-5 ISWI chromatin remodeling complex interacts with SMARCA5/SNF2H; the interaction is direct. Interacts with acetylated lysine residues on histone H1.4, H2A, H2B, H3 and H4 (in vitro). Interacts with EHMT1. In terms of tissue distribution, expressed at varying levels in several tissues, whereas a smaller transcript was expressed specifically in testis.

It is found in the nucleus. In terms of biological role, regulatory subunit of the ATP-dependent BRF-1 and BRF-5 ISWI chromatin remodeling complexes, which form ordered nucleosome arrays on chromatin and facilitate access to DNA during DNA-templated processes such as DNA replication, transcription, and repair. Both complexes regulate the spacing of nucleosomes along the chromatin and have the ability to slide mononucleosomes to the center of a DNA template. The BRF-1 ISWI chromatin remodeling complex has a lower ATP hydrolysis rate than the BRF-5 ISWI chromatin remodeling complex. Chromatin reader protein, which may play a role in transcriptional regulation via interaction with ISWI. Involved in positively modulating the rate of age-related behavioral deterioration. Represses the expression of mitochondrial function-related genes, perhaps by occupying their promoter regions, working in concert with histone methyltransferase EHMT1. This chain is Bromodomain adjacent to zinc finger domain protein 2B (BAZ2B), found in Homo sapiens (Human).